Consider the following 488-residue polypeptide: Probable (S)-N-methylcoclaurine 3'-hydroxylase isozyme 2 (488 aa).

A helical membrane pass occupies residues 2–21 (EVLSIAIVSFSFLLFLFFIL). Cysteine 427 is a binding site for heme.

The protein belongs to the cytochrome P450 family. Heme is required as a cofactor. In terms of tissue distribution, expressed at low levels in roots.

It is found in the endoplasmic reticulum membrane. The protein resides in the microsome membrane. The catalysed reaction is (S)-N-methylcoclaurine + reduced [NADPH--hemoprotein reductase] + O2 = (S)-3'-hydroxy-N-methylcoclaurine + oxidized [NADPH--hemoprotein reductase] + H2O + H(+). The protein operates within alkaloid biosynthesis; (S)-reticuline biosynthesis; (S)-reticuline from (S)-norcoclaurine: step 3/4. In terms of biological role, 3'-hydroxylation of (S)-N-methylcoclaurine. This chain is Probable (S)-N-methylcoclaurine 3'-hydroxylase isozyme 2 (CYP80B2), found in Coptis japonica (Japanese goldthread).